The chain runs to 250 residues: MTNQKQTTHFGFKSVDWNEKEKKVAEVFHSVAKNYDRMNDLMSLGIHHLWKRYTIELSHVRPGQSVLDLAGGSGDLTRLLSQKVGDSGQVVLADINAAMLHVGRDRLLDEGLFKNIRYVQGNAQCLPFADNSFHCITMGFGLRNVTDKDEALQSMYRVCKPGGKLMVLEFSTPVFPGLKPVYDWYSFNILPKIGKFVANDEASYQYLAESIRMHPDQETLKAMIERVGFEDCHYHNLSGGIVALHIAYKY.

S-adenosyl-L-methionine is bound by residues S73, D94, and 122–123; that span reads NA.

It belongs to the class I-like SAM-binding methyltransferase superfamily. MenG/UbiE family.

The catalysed reaction is a 2-demethylmenaquinol + S-adenosyl-L-methionine = a menaquinol + S-adenosyl-L-homocysteine + H(+). The enzyme catalyses a 2-methoxy-6-(all-trans-polyprenyl)benzene-1,4-diol + S-adenosyl-L-methionine = a 5-methoxy-2-methyl-3-(all-trans-polyprenyl)benzene-1,4-diol + S-adenosyl-L-homocysteine + H(+). The protein operates within quinol/quinone metabolism; menaquinone biosynthesis; menaquinol from 1,4-dihydroxy-2-naphthoate: step 2/2. It functions in the pathway cofactor biosynthesis; ubiquinone biosynthesis. Methyltransferase required for the conversion of demethylmenaquinol (DMKH2) to menaquinol (MKH2) and the conversion of 2-polyprenyl-6-methoxy-1,4-benzoquinol (DDMQH2) to 2-polyprenyl-3-methyl-6-methoxy-1,4-benzoquinol (DMQH2). The polypeptide is Ubiquinone/menaquinone biosynthesis C-methyltransferase UbiE (Legionella pneumophila (strain Paris)).